Here is a 414-residue protein sequence, read N- to C-terminus: Lipoyl synthase, mitochondrial (414 aa).

The transit peptide at 1 to 31 (MAVSTSHFRSLCASRPLSRTAIVGHISCRSY) directs the protein to the mitochondrion. Positions 31-51 (YATTEPSPSATSTSTTTTARR) are disordered. Residues 32–48 (ATTEPSPSATSTSTTTT) show a composition bias toward low complexity. [4Fe-4S] cluster-binding residues include Cys131, Cys136, Cys142, Cys162, Cys166, Cys169, and Ser377. One can recognise a Radical SAM core domain in the interval 145–366 (GSDKSAATAT…RQRALDMGFL (222 aa)).

Belongs to the radical SAM superfamily. Lipoyl synthase family. The cofactor is [4Fe-4S] cluster.

It is found in the mitochondrion. It carries out the reaction [[Fe-S] cluster scaffold protein carrying a second [4Fe-4S](2+) cluster] + N(6)-octanoyl-L-lysyl-[protein] + 2 oxidized [2Fe-2S]-[ferredoxin] + 2 S-adenosyl-L-methionine + 4 H(+) = [[Fe-S] cluster scaffold protein] + N(6)-[(R)-dihydrolipoyl]-L-lysyl-[protein] + 4 Fe(3+) + 2 hydrogen sulfide + 2 5'-deoxyadenosine + 2 L-methionine + 2 reduced [2Fe-2S]-[ferredoxin]. The protein operates within protein modification; protein lipoylation via endogenous pathway; protein N(6)-(lipoyl)lysine from octanoyl-[acyl-carrier-protein]: step 2/2. Its function is as follows. Catalyzes the radical-mediated insertion of two sulfur atoms into the C-6 and C-8 positions of the octanoyl moiety bound to the lipoyl domains of lipoate-dependent enzymes, thereby converting the octanoylated domains into lipoylated derivatives. This is Lipoyl synthase, mitochondrial from Aspergillus fumigatus (strain CBS 144.89 / FGSC A1163 / CEA10) (Neosartorya fumigata).